Here is a 223-residue protein sequence, read N- to C-terminus: Kynurenine formamidase (223 aa).

Phe-34 serves as a coordination point for substrate. Zn(2+) contacts are provided by His-64, His-68, and Asp-70. The active-site Proton donor/acceptor is the His-74. Residues His-174 and Glu-186 each coordinate Zn(2+).

It belongs to the Cyclase 1 superfamily. KynB family. As to quaternary structure, homodimer. Requires Zn(2+) as cofactor.

It catalyses the reaction N-formyl-L-kynurenine + H2O = L-kynurenine + formate + H(+). It functions in the pathway amino-acid degradation; L-tryptophan degradation via kynurenine pathway; L-kynurenine from L-tryptophan: step 2/2. In terms of biological role, catalyzes the hydrolysis of N-formyl-L-kynurenine to L-kynurenine, the second step in the kynurenine pathway of tryptophan degradation. This Polaromonas naphthalenivorans (strain CJ2) protein is Kynurenine formamidase.